A 424-amino-acid chain; its full sequence is Glutamate-1-semialdehyde 2,1-aminomutase (424 aa).

The residue at position 263 (Lys263) is an N6-(pyridoxal phosphate)lysine.

The protein belongs to the class-III pyridoxal-phosphate-dependent aminotransferase family. HemL subfamily. In terms of assembly, homodimer. It depends on pyridoxal 5'-phosphate as a cofactor.

It is found in the cytoplasm. It carries out the reaction (S)-4-amino-5-oxopentanoate = 5-aminolevulinate. Its pathway is porphyrin-containing compound metabolism; protoporphyrin-IX biosynthesis; 5-aminolevulinate from L-glutamyl-tRNA(Glu): step 2/2. This chain is Glutamate-1-semialdehyde 2,1-aminomutase, found in Campylobacter jejuni subsp. jejuni serotype O:2 (strain ATCC 700819 / NCTC 11168).